A 495-amino-acid polypeptide reads, in one-letter code: MRGTPLLLVSLFSLLQDGDCRLANAEEKLMDDLLNKTRYNNLIRPATSSSQLISIRLELSLSQLISVNEREQIMTTSIWLKQEWTDYRLAWNSSCYEGVNILRIPAKRVWLPDIVLYNNADGTYEVSVYTNVIVRSNGSIQWLPPAIYKSACKIEVKHFPFDQQNCTLKFRSWTYDHTEIDMVLKSPTAIMDDFTPSGEWDIVALPGRRTVNPQDPSYVDVTYDFIIKRKPLFYTINLIIPCVLITSLAILVFYLPSDCGEKMTLCISVLLALTFFLLLISKIVPPTSLDIPLIGKYLLFTMVLVTFSIVTTVCVLNVHHRSPSTHTMASWVKECFLHKLPTFLFMKRPGLEVSLVRVPHPSQLHLATADTAATSALGPTSPSNLYGSSMYFVNPVPAAPKSAVSSHTAGLPRDARLRSSGRFREDLQEALEGVSFIAQHLESDDRDQSVIEDWKFVAMVVDRLFLWVFVFVCILGTMGLFLPPLFQIHAPSKDS.

The N-terminal stretch at Met-1–Cys-20 is a signal peptide. At Arg-21–Thr-235 the chain is on the extracellular side. 4 N-linked (GlcNAc...) asparagine glycosylation sites follow: Asn-35, Asn-92, Asn-137, and Asn-165. A disulfide bridge links Cys-152 with Cys-166. The chain crosses the membrane as a helical span at residues Ile-236–Pro-256. Over Ser-257–Thr-264 the chain is Cytoplasmic. Residue Glu-261 coordinates Na(+). The chain crosses the membrane as a helical span at residues Leu-265–Pro-285. Residues Pro-286 to Tyr-297 are Extracellular-facing. Residues Leu-298–Val-318 form a helical membrane-spanning segment. Over His-319–Arg-463 the chain is Cytoplasmic. The helical transmembrane segment at Leu-464 to Pro-484 threads the bilayer. Topologically, residues Leu-485–Ser-495 are extracellular.

This sequence belongs to the ligand-gated ion channel (TC 1.A.9) family. Acetylcholine receptor (TC 1.A.9.1) subfamily. Beta-4/CHRNB4 sub-subfamily. In terms of assembly, neuronal AChR is composed of two different types of subunits: alpha and beta. CHRNB4/Beta-4 subunit can be combined to CHRNA2/alpha-2, CHRNA3/alpha-3 or CHRNA4/alpha-4, CHRNA5/alpha-5 and CHRNB3/beta-3 to give rise to functional receptors. Forms stoichiometries such as (CHRNA3)2:(CHRNB4)3 or (CHRNA3:CHRNB4)2:CHRNB3. Interacts with RIC3; which is required for proper folding and assembly. Interacts with LYPD6. In terms of tissue distribution, in the brain, it is detected in the medial habenula. In the peripheral nervous system, it is found at least in the adrenal gland.

Its subcellular location is the synaptic cell membrane. The protein resides in the cell membrane. It catalyses the reaction Ca(2+)(in) = Ca(2+)(out). The catalysed reaction is K(+)(in) = K(+)(out). The enzyme catalyses Na(+)(in) = Na(+)(out). Activated by a myriad of ligands such as acetylcholine, cytisine, nicotine, choline and epibatidine. nAChR activity is inhibited by the antagonist alpha-conotoxins BuIA and MII, small disulfide-constrained peptides from cone snails. The heteropentamer CHRNA3:CHRNB4 activity is blocked by the alpha-conotoxin ImI and AuIB. Component of neuronal acetylcholine receptors (nAChRs) that function as pentameric, ligand-gated cation channels with high calcium permeability among other activities. nAChRs are excitatory neurotrasnmitter receptors formed by a collection of nAChR subunits known to mediate synaptic transmission in the nervous system and the neuromuscular junction. Each nAchR subunit confers differential attributes to channel properties, including activation, deactivation and desensitization kinetics, pH sensitivity, cation permeability, and binding to allosteric modulators. CHRNB4 forms heteropentameric neuronal acetylcholine receptors with CHRNA2, CHRNA3 and CHRNA4, as well as CHRNA5 and CHRNB3 as accesory subunits. CHRNA3:CHRNB4 being predominant in neurons of the autonomic ganglia, it is known as ganglionic nicotinic receptor. CHRNA3:CHRNB4 or CHRNA3:CHRNA5:CHRNB4 play also an important role in the habenulo-interpeduncular tract, modulating the mesolimbic dopamine system and affecting reward circuits and addiction. Hypothalamic CHRNA3:CHRNB4 nAChR activation by nicotine leads to activation of POMC neurons and a decrease in food intake. The sequence is that of Neuronal acetylcholine receptor subunit beta-4 (Chrnb4) from Rattus norvegicus (Rat).